The primary structure comprises 153 residues: Pheromone-binding protein Gp-9 (153 aa).

Positions 1 to 19 (MKTFVLHIFIFALVAFASA) are cleaved as a signal peptide. 3 cysteine pairs are disulfide-bonded: C37–C77, C73–C129, and C118–C138.

Belongs to the PBP/GOBP family. As to quaternary structure, homodimer.

It is found in the secreted. Functionally, colony queen number, a major feature of social organization, is associated with worker genotype for Gp-9. Colonies are headed by either a single reproductive queen (monogyne form) or multiple queens (polygyne form). Differences in worker Gp-9 genotypes between social forms may cause differences in workers' abilities to recognize queens and regulate their numbers. This is Pheromone-binding protein Gp-9 from Solenopsis tridens (Fire ant).